The sequence spans 398 residues: Signal-regulatory protein beta-1 (398 aa).

An N-terminal signal peptide occupies residues 1–29; it reads MPVPASWPHLPSPFLLMTLLLGRLTGVAG. The region spanning 30-136 is the Ig-like V-type domain; sequence EDELQVIQPE…SPDDVEFKSG (107 aa). Residues 30 to 371 lie on the Extracellular side of the membrane; that stretch reads EDELQVIQPE…EAALAPTAPL (342 aa). Cystine bridges form between C54-C120 and C169-C227. Ig-like C1-type domains are found at residues 147 to 246 and 253 to 347; these read PSAP…ANLS and PTLE…YALE. N244, N269, and N291 each carry an N-linked (GlcNAc...) asparagine glycan. A helical membrane pass occupies residues 372–392; it reads LVALLLGPKLLLVVGVSAIYI. Residues 393 to 398 are Cytoplasmic-facing; sequence CWKQKA.

Homodimer; disulfide-linked. Interacts with TYROBP. This interaction results in the recruitment of SYK. N-glycosylated. Detected in monocytes and dendritic cells.

It localises to the cell membrane. In terms of biological role, immunoglobulin-like cell surface receptor involved in the negative regulation of receptor tyrosine kinase-coupled signaling processes. Also participates in the recruitment of tyrosine kinase SYK. Triggers activation of myeloid cells when associated with TYROBP. This chain is Signal-regulatory protein beta-1 (SIRPB1), found in Homo sapiens (Human).